A 101-amino-acid polypeptide reads, in one-letter code: NADH-quinone oxidoreductase subunit K (101 aa).

3 helical membrane-spanning segments follow: residues 4–24 (LSHY…GIFL), 30–50 (IVLL…FIAF), and 61–81 (VFVF…LAIL).

The protein belongs to the complex I subunit 4L family. In terms of assembly, NDH-1 is composed of 14 different subunits. Subunits NuoA, H, J, K, L, M, N constitute the membrane sector of the complex.

It localises to the cell inner membrane. The enzyme catalyses a quinone + NADH + 5 H(+)(in) = a quinol + NAD(+) + 4 H(+)(out). In terms of biological role, NDH-1 shuttles electrons from NADH, via FMN and iron-sulfur (Fe-S) centers, to quinones in the respiratory chain. The immediate electron acceptor for the enzyme in this species is believed to be ubiquinone. Couples the redox reaction to proton translocation (for every two electrons transferred, four hydrogen ions are translocated across the cytoplasmic membrane), and thus conserves the redox energy in a proton gradient. The chain is NADH-quinone oxidoreductase subunit K from Methylovorus glucosotrophus (strain SIP3-4).